Consider the following 836-residue polypeptide: Neuroligin-2 (836 aa).

The signal sequence occupies residues 1–14; it reads MWLLALCLVGLAGA. Residues 15 to 678 are Extracellular-facing; it reads QRGGGGPGGG…DSRDYSTELS (664 aa). Residues Asn-98 and Asn-136 are each glycosylated (N-linked (GlcNAc...) asparagine). 3 disulfide bridges follow: Cys-106–Cys-141, Cys-317–Cys-328, and Cys-487–Cys-521. Residue Asn-522 is glycosylated (N-linked (GlcNAc...) asparagine). The disordered stretch occupies residues 623 to 661; that stretch reads PPYATRWPPRTPGPGTSGTRRPPPPATLPPESDIDLGPR. Residues 679 to 699 form a helical membrane-spanning segment; sequence VTVAVGASLLFLNILAFAALY. A required for interaction with LHFPL4 region spans residues 679–699; that stretch reads VTVAVGASLLFLNILAFAALY. At 700–836 the chain is on the cytoplasmic side; the sequence is YKRDRRQELR…LPHPHSTTRV (137 aa). 2 disordered regions span residues 711 to 735 and 791 to 836; these read RRLS…TAGR and LLPS…TTRV. Phosphoserine is present on residues Ser-714 and Ser-719. Gly residues predominate over residues 717–728; it reads GGSGSGVPGGGP. Residues 796–819 show a composition bias toward pro residues; the sequence is LGPPPPPPPPSLHPFGPFPPPPPT. Residues 824–836 show a composition bias toward polar residues; it reads NNTLPHPHSTTRV.

Belongs to the type-B carboxylesterase/lipase family. Interacts with neurexins NRXN1, NRXN2 and NRXN3. Interaction with neurexins is mediated by heparan sulfate glycan modification on neurexin. Interacts (via its C-terminus) with DLG4/PSD-95 (via PDZ domain 3). Interacts with PATJ. Interacts with MDGA2. Interacts with GPHN. Interacts with MDGA1. Found in a complex with MAGI2 and IGSF9B, where it interacts with MAGI2 (via WW 1, WW 2 and PDZ 2 domains). Identified in a complex of 720 kDa composed of LHFPL4, NLGN2, GABRA1, GABRB2, GABRG2 and GABRB3. Interacts with LHFPL4; leading to mutual regulation of the protein level and synaptic clustering. Interacts with GABRA1. As to expression, brain and arteries. Detected in the retina outer plexiform layer (at protein level). Widely expressed. Detected in heart, brain, spleen, lung, liver, skeletal muscle, kidney and testis.

It localises to the cell membrane. The protein resides in the postsynaptic cell membrane. The protein localises to the presynaptic cell membrane. Transmembrane scaffolding protein involved in cell-cell interactions via its interactions with neurexin family members. Mediates cell-cell interactions both in neurons and in other types of cells, such as Langerhans beta cells. Mediates cell-cell interactions between Langerhans beta cells and modulates insulin secretion. Plays a role in synapse function and synaptic signal transmission, especially via gamma-aminobutyric acid receptors (GABA(A) receptors). Functions by recruiting and clustering synaptic proteins. Promotes clustering of postsynaptic GABRG2 and GPHN. Promotes clustering of postsynaptic LHFPL4. Modulates signaling by inhibitory synapses, and thereby plays a role in controlling the ratio of signaling by excitatory and inhibitory synapses and information processing. Required for normal signal amplitude from inhibitory synapses, but is not essential for normal signal frequency. May promote the initial formation of synapses, but is not essential for this. In vitro, triggers the de novo formation of presynaptic structures. The polypeptide is Neuroligin-2 (Nlgn2) (Mus musculus (Mouse)).